We begin with the raw amino-acid sequence, 692 residues long: E3 ubiquitin-protein ligase MARCHF7 (692 aa).

Methionine 1 is subject to N-acetylmethionine. Disordered regions lie at residues 1–165 (MESK…SHRS), 201–280 (STNH…GRRT), 296–343 (FFSR…RASE), 360–425 (LSQN…HLFR), 440–474 (SLGA…RNTG), and 512–532 (SSAD…PEKL). The segment covering 37-48 (YHSRDSSFRLDS) has biased composition (basic and acidic residues). Polar residues-rich tracts occupy residues 61-83 (PYQS…SQNQ) and 95-132 (SCTN…SSMV). Residues 140–153 (LMRERRDLERRRDS) are compositionally biased toward basic and acidic residues. The segment covering 201–214 (STNHQLPSEHQTVP) has biased composition (polar residues). Over residues 215–233 (SSRDSSRSSFRSHFSPRQS) the composition is skewed to low complexity. Positions 235-272 (SFRNSSHPAFSYLSSRNETPTISSSERAGSSQRPFQES) are enriched in polar residues. A compositionally biased stretch (low complexity) spans 296–305 (FFSRRSSQDS). Residues 306 to 336 (LNTRSLSSENYISPRTLTSQSRNNGASSSEV) show a composition bias toward polar residues. Phosphoserine occurs at positions 318 and 389. The span at 450–462 (ASGASGNASASGS) shows a compositional bias: low complexity. Positions 516–532 (GKSEKAKSAPSRDPEKL) are enriched in basic and acidic residues. Residues 545-615 (DEEEEGDLCR…ELCKEKLQLN (71 aa)) form an RING-CH-type zinc finger. Zn(2+)-binding residues include cysteine 553, cysteine 556, cysteine 571, cysteine 573, histidine 581, cysteine 584, cysteine 605, and cysteine 608. Threonine 687 carries the phosphothreonine modification. The residue at position 688 (serine 688) is a Phosphoserine.

It localises to the cytoplasm. The enzyme catalyses S-ubiquitinyl-[E2 ubiquitin-conjugating enzyme]-L-cysteine + [acceptor protein]-L-lysine = [E2 ubiquitin-conjugating enzyme]-L-cysteine + N(6)-ubiquitinyl-[acceptor protein]-L-lysine.. It participates in protein modification; protein ubiquitination. Its function is as follows. E3 ubiquitin-protein ligase which may specifically enhance the E2 activity of HIP2. E3 ubiquitin ligases accept ubiquitin from an E2 ubiquitin-conjugating enzyme in the form of a thioester and then directly transfer the ubiquitin to targeted substrates. May be involved in T-cell proliferation by regulating LIF secretion. May play a role in lysosome homeostasis. Promotes 'Lys-6', 'Lys-11' and 'Lys-63'-linked mixed polyubiquitination on ATG14 leading to the inhibition of autophagy by impairing the interaction between ATG14 and STX7. Participates in the dopamine-mediated negative regulation of the NLRP3 inflammasome by promoting its uibiquitination and subsequent degradation. This is E3 ubiquitin-protein ligase MARCHF7 (Marchf7) from Rattus norvegicus (Rat).